We begin with the raw amino-acid sequence, 588 residues long: Aspartate--tRNA ligase (588 aa).

Glutamate 174 serves as a coordination point for L-aspartate. Residues 198–201 form an aspartate region; it reads QLFK. Arginine 220 lines the L-aspartate pocket. ATP-binding positions include 220–222 and glutamine 229; that span reads RDE. Histidine 448 provides a ligand contact to L-aspartate. Glutamate 482 provides a ligand contact to ATP. Arginine 489 contributes to the L-aspartate binding site. Residue 534 to 537 coordinates ATP; that stretch reads GIDR.

This sequence belongs to the class-II aminoacyl-tRNA synthetase family. Type 1 subfamily. As to quaternary structure, homodimer.

The protein resides in the cytoplasm. The enzyme catalyses tRNA(Asp) + L-aspartate + ATP = L-aspartyl-tRNA(Asp) + AMP + diphosphate. Functionally, catalyzes the attachment of L-aspartate to tRNA(Asp) in a two-step reaction: L-aspartate is first activated by ATP to form Asp-AMP and then transferred to the acceptor end of tRNA(Asp). In Xanthomonas campestris pv. campestris (strain B100), this protein is Aspartate--tRNA ligase.